A 657-amino-acid chain; its full sequence is RNA polymerase II-associated protein 3 (657 aa).

The interval 39 to 82 (DAKLRNQTGVDSQILPPIRNKDFKKKKKSKSKPPLEKKSQEDEI) is disordered. Over residues 60–69 (DFKKKKKSKS) the composition is skewed to basic residues. A compositionally biased stretch (basic and acidic residues) spans 71-82 (PPLEKKSQEDEI). 7 TPR repeats span residues 132–165 (ALLEKEKGNNYFKSGQYDEAIECYTRGMDADPYN), 167–199 (VLPTNRASAFFRLKKYAVAESDCNLAIALNHNY), 200–233 (AKAYARRGAARLALKDLQGAKEDYEKVLELDVNN), 284–317 (AIMQKDLGNAYFKEGKYEIAIDCYSQGMEADTTN), 319–351 (LLPANRAMAYLKIQKYKEAETDCTLAISLDASY), 352–385 (CKAFARRGTARIMLGKQKEAKEDFEMVLKLDPGN), and 503–536 (PSSGEEHSVSQPSPPKIEKVVTTFSESLNIGIPV). A disordered region spans residues 496 to 517 (DTYGSCEPSSGEEHSVSQPSPP).

The protein belongs to the RPAP3 family.

Its function is as follows. May for an interface between the RNA polymerase II enzyme and chaperone/scaffolding protein. This is RNA polymerase II-associated protein 3 (rpap3) from Xenopus tropicalis (Western clawed frog).